A 448-amino-acid chain; its full sequence is Ribosomal protein uS12 methylthiotransferase RimO (448 aa).

The region spanning K13–P128 is the MTTase N-terminal domain. The [4Fe-4S] cluster site is built by C22, C58, C91, C167, C171, and C174. Residues N153–H382 enclose the Radical SAM core domain. Residues Q383–D448 enclose the TRAM domain.

It belongs to the methylthiotransferase family. RimO subfamily. [4Fe-4S] cluster serves as cofactor.

Its subcellular location is the cytoplasm. It carries out the reaction L-aspartate(89)-[ribosomal protein uS12]-hydrogen + (sulfur carrier)-SH + AH2 + 2 S-adenosyl-L-methionine = 3-methylsulfanyl-L-aspartate(89)-[ribosomal protein uS12]-hydrogen + (sulfur carrier)-H + 5'-deoxyadenosine + L-methionine + A + S-adenosyl-L-homocysteine + 2 H(+). Catalyzes the methylthiolation of an aspartic acid residue of ribosomal protein uS12. The polypeptide is Ribosomal protein uS12 methylthiotransferase RimO (Leptospira biflexa serovar Patoc (strain Patoc 1 / Ames)).